A 419-amino-acid polypeptide reads, in one-letter code: 3-isopropylmalate dehydratase large subunit (419 aa).

[4Fe-4S] cluster-binding residues include C300, C360, and C363.

The protein belongs to the aconitase/IPM isomerase family. LeuC type 2 subfamily. In terms of assembly, heterodimer of LeuC and LeuD. [4Fe-4S] cluster serves as cofactor.

The catalysed reaction is (2R,3S)-3-isopropylmalate = (2S)-2-isopropylmalate. The protein operates within amino-acid biosynthesis; L-leucine biosynthesis; L-leucine from 3-methyl-2-oxobutanoate: step 2/4. Functionally, catalyzes the isomerization between 2-isopropylmalate and 3-isopropylmalate, via the formation of 2-isopropylmaleate. This chain is 3-isopropylmalate dehydratase large subunit, found in Nitratidesulfovibrio vulgaris (strain DP4) (Desulfovibrio vulgaris).